Here is a 361-residue protein sequence, read N- to C-terminus: uncharacterized protein (361 aa).

Position 41–48 (41–48 (GPLNSGKT)) interacts with ATP.

The protein belongs to the archaeal ATPase family.

This is an uncharacterized protein from Methanocaldococcus jannaschii (strain ATCC 43067 / DSM 2661 / JAL-1 / JCM 10045 / NBRC 100440) (Methanococcus jannaschii).